A 121-amino-acid polypeptide reads, in one-letter code: Large ribosomal subunit protein bL12 (121 aa).

This sequence belongs to the bacterial ribosomal protein bL12 family. In terms of assembly, homodimer. Part of the ribosomal stalk of the 50S ribosomal subunit. Forms a multimeric L10(L12)X complex, where L10 forms an elongated spine to which 2 to 4 L12 dimers bind in a sequential fashion. Binds GTP-bound translation factors.

In terms of biological role, forms part of the ribosomal stalk which helps the ribosome interact with GTP-bound translation factors. Is thus essential for accurate translation. This Pediococcus pentosaceus (strain ATCC 25745 / CCUG 21536 / LMG 10740 / 183-1w) protein is Large ribosomal subunit protein bL12.